Reading from the N-terminus, the 247-residue chain is Pulmonary surfactant-associated protein A (247 aa).

The N-terminal stretch at 1–19 (MWCSLALILILVTVSGIMC) is a signal peptide. N-linked (GlcNAc...) asparagine glycosylation occurs at asparagine 20. The 73-residue stretch at 27-99 (GSPGIPGTPG…PGERGPPGLP (73 aa)) folds into the Collagen-like domain. A 4-hydroxyproline mark is found at proline 29, proline 32, proline 35, proline 41, proline 53, proline 56, proline 62, proline 66, and proline 69. The interval 32–101 (PGTPGSHGLP…ERGPPGLPAS (70 aa)) is disordered. A compositionally biased stretch (basic and acidic residues) spans 41 to 50 (PGRDGRDGVK). A compositionally biased stretch (pro residues) spans 53–64 (PGPPGPMGPPGV). Over residues 83–92 (ERGDKGDPGE) the composition is skewed to basic and acidic residues. Residues 131-247 (LAVGDKVFAT…LQSRLTICEF (117 aa)) enclose the C-type lectin domain. Disulfide bonds link cysteine 154/cysteine 245 and cysteine 223/cysteine 237. Residue asparagine 206 is glycosylated (N-linked (GlcNAc...) asparagine). Residues glutamate 214, arginine 216, asparagine 233, and aspartate 234 each contribute to the Ca(2+) site.

Belongs to the SFTPA family. Oligomeric complex of 6 set of homotrimers.

It is found in the secreted. The protein localises to the extracellular space. It localises to the extracellular matrix. The protein resides in the surface film. In terms of biological role, in presence of calcium ions, it binds to surfactant phospholipids and contributes to lower the surface tension at the air-liquid interface in the alveoli of the mammalian lung and is essential for normal respiration. Enhances the expression of MYO18A/SP-R210 on alveolar macrophages. The sequence is that of Pulmonary surfactant-associated protein A (SFTPA1) from Cavia porcellus (Guinea pig).